The following is a 327-amino-acid chain: Serum response factor homolog (327 aa).

Residues 12–43 (QKLQNASPALPEGTSSTPTPSSSTGLLPNGKK) are disordered. A compositionally biased stretch (low complexity) spans 25 to 35 (TSSTPTPSSST). The 61-residue stretch at 45–105 (KGRVKIKMEY…GHVYTYATPK (61 aa)) folds into the MADS-box domain. Positions 189–225 (TFGEDDYNNDESGDDSDSEEASSDIKEEYQGSPTMVK) are disordered. Positions 191 to 210 (GEDDYNNDESGDDSDSEEAS) are enriched in acidic residues.

In terms of tissue distribution, expressed in muscle, varying with age, decreasing twofold during the first week of adulthood.

It localises to the nucleus. Its function is as follows. Transcription factor. Regulates myogenesis, in cooperation with transcription factors hlh-1 and hnd-1. Required for maintenance of muscle in adulthood. The polypeptide is Serum response factor homolog (Caenorhabditis elegans).